The sequence spans 313 residues: Urease accessory protein UreD (313 aa).

The disordered stretch occupies residues 1–30; the sequence is MTDLSFPGQAASPGEGAGQTPSGGSGHRFD. The span at 15–26 shows a compositional bias: gly residues; the sequence is EGAGQTPSGGSG.

Belongs to the UreD family. As to quaternary structure, ureD, UreF and UreG form a complex that acts as a GTP-hydrolysis-dependent molecular chaperone, activating the urease apoprotein by helping to assemble the nickel containing metallocenter of UreC. The UreE protein probably delivers the nickel.

The protein localises to the cytoplasm. Required for maturation of urease via the functional incorporation of the urease nickel metallocenter. This Chromohalobacter salexigens (strain ATCC BAA-138 / DSM 3043 / CIP 106854 / NCIMB 13768 / 1H11) protein is Urease accessory protein UreD.